We begin with the raw amino-acid sequence, 477 residues long: Argininosuccinate lyase (477 aa).

It belongs to the lyase 1 family. Argininosuccinate lyase subfamily.

It is found in the cytoplasm. It catalyses the reaction 2-(N(omega)-L-arginino)succinate = fumarate + L-arginine. The protein operates within amino-acid biosynthesis; L-arginine biosynthesis; L-arginine from L-ornithine and carbamoyl phosphate: step 3/3. The sequence is that of Argininosuccinate lyase from Corynebacterium efficiens (strain DSM 44549 / YS-314 / AJ 12310 / JCM 11189 / NBRC 100395).